Consider the following 68-residue polypeptide: Large ribosomal subunit protein bL32 (68 aa).

A disordered region spans residues 1–21 (MAVQQNKVSKSRRNNRRAHDS).

The protein belongs to the bacterial ribosomal protein bL32 family.

The protein is Large ribosomal subunit protein bL32 of Roseobacter denitrificans (strain ATCC 33942 / OCh 114) (Erythrobacter sp. (strain OCh 114)).